Reading from the N-terminus, the 384-residue chain is Sensor protein VanS (384 aa).

2 consecutive transmembrane segments (helical) span residues 21–41 (MYIV…RSMI) and 76–96 (IDIF…RVML). Positions 161-376 (YLAHDIKTPL…TFRVELPAMP (216 aa)) constitute a Histidine kinase domain. His164 is modified (phosphohistidine; by autocatalysis). Residues 221 to 384 (QTITLTKTHI…MPDLVDKRRS (164 aa)) form an involved in low-affinity ATP-binding. Exhibits higher affinity for ATP than GTP region.

Autophosphorylated.

Its subcellular location is the membrane. The catalysed reaction is ATP + protein L-histidine = ADP + protein N-phospho-L-histidine.. With respect to regulation, phosphorylation of VanR inhibited by EDTA. Functionally, member of the two-component regulatory system VanS/VanR. Functions as a sensor protein kinase which is autophosphorylated at a histidine residue in response to environmental stimuli, such as glycopeptide antibiotics. VanS transfers its phosphate group to transcriptional regulatory protein VanR, thereby modulating expression of target genes. Binds directly to, and autophosphorylation activity is enhanced by, the glycopeptides vancomycin and teicoplanin, in vitro. However it has also been reported that autophosphorylation, phosphate transfer to VanR and dephosphorylation of phospho-VanR are all unaffected by the presence of vancomycin, in vitro. In the absence of vancomycin, negatively regulates VanR-mediated activation of vanS, vanH, vanA and vanX, probably as a result of dephosphorylating phospho-VanR. May inhibit promoter-specific DNA binding by VanR. Involved in conferring vancomycin resistance. This is Sensor protein VanS from Enterococcus faecium (Streptococcus faecium).